We begin with the raw amino-acid sequence, 289 residues long: MPKASHQDLRRSFRALTSSNSCFHTASVFDPMSARIAADLGFEVGILGGSVASLQVLAAPDFALITLSEFVEQATRIGRVAQLPVIADADHGYGNALNVMRTVVELERAGISALTIEDTLLPAQFGRKSTDLISTAEGVGKIRAALEARVDPEMSIFARTNAAIIPVQEAISRVQQYQAAGADGITIVGIRDFDHLAQISEGVTVPLMLVTYGNPELHDNARLAEMGVRVCVHGHAAYFAAIKATYDCLREQRQILGSESNMSATELTHTYTQPEDYVEWARKFMNVNE.

Serine 50 lines the substrate pocket. A Mg(2+)-binding site is contributed by aspartate 88. Substrate contacts are provided by arginine 159 and histidine 235.

This sequence belongs to the isocitrate lyase/PEP mutase superfamily. Oxaloacetate decarboxylase family. As to quaternary structure, homotetramer; dimer of dimers. Requires Mg(2+) as cofactor.

The enzyme catalyses oxaloacetate + H(+) = pyruvate + CO2. In terms of biological role, catalyzes the decarboxylation of oxaloacetate into pyruvate. Seems to play a role in maintaining cellular concentrations of bicarbonate and pyruvate. This Pseudomonas savastanoi pv. phaseolicola (strain 1448A / Race 6) (Pseudomonas syringae pv. phaseolicola (strain 1448A / Race 6)) protein is Oxaloacetate decarboxylase.